A 487-amino-acid chain; its full sequence is Glutamyl-tRNA(Gln) amidotransferase subunit A (487 aa).

The active-site Charge relay system is the Lys-78. Residues 135-144 show a composition bias toward polar residues; that stretch reads SAYQTTTNPW. Positions 135–155 are disordered; it reads SAYQTTTNPWDASRVPGGSSG. Ser-153 (charge relay system) is an active-site residue. The Acyl-ester intermediate role is filled by Ser-177.

The protein belongs to the amidase family. GatA subfamily. Heterotrimer of A, B and C subunits.

It carries out the reaction L-glutamyl-tRNA(Gln) + L-glutamine + ATP + H2O = L-glutaminyl-tRNA(Gln) + L-glutamate + ADP + phosphate + H(+). Functionally, allows the formation of correctly charged Gln-tRNA(Gln) through the transamidation of misacylated Glu-tRNA(Gln) in organisms which lack glutaminyl-tRNA synthetase. The reaction takes place in the presence of glutamine and ATP through an activated gamma-phospho-Glu-tRNA(Gln). This chain is Glutamyl-tRNA(Gln) amidotransferase subunit A, found in Maridesulfovibrio salexigens (strain ATCC 14822 / DSM 2638 / NCIMB 8403 / VKM B-1763) (Desulfovibrio salexigens).